Here is a 164-residue protein sequence, read N- to C-terminus: Large ribosomal subunit protein uL10 (164 aa).

The protein belongs to the universal ribosomal protein uL10 family. Part of the ribosomal stalk of the 50S ribosomal subunit. The N-terminus interacts with L11 and the large rRNA to form the base of the stalk. The C-terminus forms an elongated spine to which L12 dimers bind in a sequential fashion forming a multimeric L10(L12)X complex.

In terms of biological role, forms part of the ribosomal stalk, playing a central role in the interaction of the ribosome with GTP-bound translation factors. The sequence is that of Large ribosomal subunit protein uL10 from Aliivibrio salmonicida (strain LFI1238) (Vibrio salmonicida (strain LFI1238)).